A 175-amino-acid chain; its full sequence is Respiratory supercomplex factor 1-B, mitochondrial (175 aa).

In terms of domain architecture, HIG1 spans 3 to 94 (DQADVLADPD…TERKQRREFE (92 aa)). 2 helical membrane-spanning segments follow: residues 30–46 (PLIP…LYRA) and 66–83 (IYAQ…GMYY). Residues 83 to 115 (YKTERKQRREFEKKVEERKAQEKRDAWLRELEA) adopt a coiled-coil conformation.

Belongs to the RCF1 family. Associates with the respiratory chain complex III/complex IV supercomplex.

Its subcellular location is the mitochondrion membrane. Functionally, cytochrome c oxidase subunit which plays a role in assembly of respiratory supercomplexes. The protein is Respiratory supercomplex factor 1-B, mitochondrial (rcf1-B) of Talaromyces marneffei (strain ATCC 18224 / CBS 334.59 / QM 7333) (Penicillium marneffei).